Reading from the N-terminus, the 338-residue chain is Tetraacyldisaccharide 4'-kinase (338 aa).

An ATP-binding site is contributed by 61–68; sequence TLGGTGKT.

Belongs to the LpxK family.

It carries out the reaction a lipid A disaccharide + ATP = a lipid IVA + ADP + H(+). Its pathway is glycolipid biosynthesis; lipid IV(A) biosynthesis; lipid IV(A) from (3R)-3-hydroxytetradecanoyl-[acyl-carrier-protein] and UDP-N-acetyl-alpha-D-glucosamine: step 6/6. Its function is as follows. Transfers the gamma-phosphate of ATP to the 4'-position of a tetraacyldisaccharide 1-phosphate intermediate (termed DS-1-P) to form tetraacyldisaccharide 1,4'-bis-phosphate (lipid IVA). In Nitrosococcus oceani (strain ATCC 19707 / BCRC 17464 / JCM 30415 / NCIMB 11848 / C-107), this protein is Tetraacyldisaccharide 4'-kinase.